The chain runs to 419 residues: S-adenosylmethionine synthase (419 aa).

Residue H15 participates in ATP binding. Mg(2+) is bound at residue D17. E43 is a binding site for K(+). Residues E56 and Q100 each coordinate L-methionine. The tract at residues 100–110 (QSPDIAQGVDE) is flexible loop. ATP-binding positions include 171–173 (DGK), 248–249 (KF), D257, 263–264 (RK), A280, and K284. D257 is a binding site for L-methionine. K288 contributes to the L-methionine binding site.

The protein belongs to the AdoMet synthase family. As to quaternary structure, homotetramer; dimer of dimers. It depends on Mg(2+) as a cofactor. The cofactor is K(+).

The protein localises to the cytoplasm. The catalysed reaction is L-methionine + ATP + H2O = S-adenosyl-L-methionine + phosphate + diphosphate. It participates in amino-acid biosynthesis; S-adenosyl-L-methionine biosynthesis; S-adenosyl-L-methionine from L-methionine: step 1/1. Its function is as follows. Catalyzes the formation of S-adenosylmethionine (AdoMet) from methionine and ATP. The overall synthetic reaction is composed of two sequential steps, AdoMet formation and the subsequent tripolyphosphate hydrolysis which occurs prior to release of AdoMet from the enzyme. The chain is S-adenosylmethionine synthase from Parasynechococcus marenigrum (strain WH8102).